Here is a 213-residue protein sequence, read N- to C-terminus: ATP synthase peripheral stalk subunit OSCP, mitochondrial (213 aa).

The transit peptide at 1-23 (MAAPAVSGFSRQVRCFSTSVVRP) directs the protein to the mitochondrion. Positions 5–23 (AVSGFSRQVRCFSTSVVRP) match the SIFI-degron motif. N6-acetyllysine is present on residues Lys-54, Lys-60, Lys-70, and Lys-73. Lys-90 is subject to N6-succinyllysine. An N6-acetyllysine; alternate mark is found at Lys-100 and Lys-158. N6-succinyllysine; alternate is present on residues Lys-100 and Lys-158. N6-acetyllysine is present on residues Lys-172, Lys-176, and Lys-192. Residue Lys-199 is modified to N6-succinyllysine.

The protein belongs to the ATPase delta chain family. As to quaternary structure, component of the ATP synthase complex composed at least of ATP5F1A/subunit alpha, ATP5F1B/subunit beta, ATP5MC1/subunit c (homooctomer), MT-ATP6/subunit a, MT-ATP8/subunit 8, ATP5ME/subunit e, ATP5MF/subunit f, ATP5MG/subunit g, ATP5MK/subunit k, ATP5MJ/subunit j, ATP5F1C/subunit gamma, ATP5F1D/subunit delta, ATP5F1E/subunit epsilon, ATP5PF/subunit F6, ATP5PB/subunit b, ATP5PD/subunit d, ATP5PO/subunit OSCP. ATP synthase complex consists of a soluble F(1) head domain (subunits alpha(3) and beta(3)) - the catalytic core - and a membrane F(0) domain - the membrane proton channel (subunits c, a, 8, e, f, g, k and j). These two domains are linked by a central stalk (subunits gamma, delta, and epsilon) rotating inside the F1 region and a stationary peripheral stalk (subunits F6, b, d, and OSCP). Post-translationally, in response to mitochondrial stress, the precursor protein is ubiquitinated by the SIFI complex in the cytoplasm before mitochondrial import, leading to its degradation. Within the SIFI complex, UBR4 initiates ubiquitin chain that are further elongated or branched by KCMF1.

The protein localises to the mitochondrion. It localises to the mitochondrion inner membrane. In terms of biological role, subunit OSCP, of the mitochondrial membrane ATP synthase complex (F(1)F(0) ATP synthase or Complex V) that produces ATP from ADP in the presence of a proton gradient across the membrane which is generated by electron transport complexes of the respiratory chain. ATP synthase complex consist of a soluble F(1) head domain - the catalytic core - and a membrane F(1) domain - the membrane proton channel. These two domains are linked by a central stalk rotating inside the F(1) region and a stationary peripheral stalk. During catalysis, ATP synthesis in the catalytic domain of F(1) is coupled via a rotary mechanism of the central stalk subunits to proton translocation. In vivo, can only synthesize ATP although its ATP hydrolase activity can be activated artificially in vitro. Part of the complex F(0) domain. Part of the complex F(0) domain and the peripheric stalk, which acts as a stator to hold the catalytic alpha(3)beta(3) subcomplex and subunit a/ATP6 static relative to the rotary elements. This Rhinolophus ferrumequinum (Greater horseshoe bat) protein is ATP synthase peripheral stalk subunit OSCP, mitochondrial.